The sequence spans 1213 residues: Hybrid signal transduction histidine kinase K (1213 aa).

Disordered stretches follow at residues 1–37 (MIEL…NKTN), 98–189 (NNNY…SSSS), 279–392 (NKNV…IPFR), and 495–565 (TTEQ…NYNN). Composition is skewed to low complexity over residues 98-162 (NNNY…QKDQ), 171-189 (SLSS…SSSS), 279-331 (NKNV…NSGA), 339-371 (NNNN…SNNN), 498-511 (QQQQ…QQQQ), and 522-565 (QRQQ…NYNN). The next 6 helical transmembrane spans lie at 600-618 (IIFN…GSNI), 628-648 (LIIG…IFFW), 652-672 (INKP…SLVI), 676-696 (TGSI…ALTI), 729-749 (IQWS…NLYG), and 768-788 (IIDV…QYFI). One can recognise a Histidine kinase domain in the interval 822–1052 (TMSHEIRTPL…TFWFILPLEE (231 aa)). The residue at position 825 (H825) is a Phosphohistidine; by autocatalysis. The Response regulatory domain maps to 1076 to 1199 (KVLIAEDNII…QLRSAIEMAI (124 aa)). D1125 is subject to 4-aspartylphosphate.

In terms of processing, activation probably requires transfer of a phosphate group between a histidine in the kinase core (transmitter) domain and an aspartate of the receiver domain.

It is found in the nucleus membrane. It catalyses the reaction ATP + protein L-histidine = ADP + protein N-phospho-L-histidine.. In terms of biological role, involved in a signal transduction pathway that regulates morphogenesis and controls entry into the culmination stage. May act via the regA pathway, being activated by a morphogenesis-stimulated ligand, reducing phosphodiesterase regA levels and allowing cAMP level to rise to promote the culmination stage. This protein probably undergoes an ATP-dependent autophosphorylation at a conserved histidine residue in the kinase core, and a phosphoryl group is then transferred to a conserved aspartate residue in the receiver domain. In Dictyostelium discoideum (Social amoeba), this protein is Hybrid signal transduction histidine kinase K (dhkK).